A 955-amino-acid chain; its full sequence is UvrABC system protein A (955 aa).

Residue Gly-35–Ser-42 participates in ATP binding. ABC transporter domains lie at Trp-322 to Ile-601 and Gly-621 to Lys-951. An ATP-binding site is contributed by Gly-654 to Ser-661. Residues Cys-754–Cys-780 form a C4-type zinc finger.

It belongs to the ABC transporter superfamily. UvrA family. In terms of assembly, forms a heterotetramer with UvrB during the search for lesions.

Its subcellular location is the cytoplasm. The UvrABC repair system catalyzes the recognition and processing of DNA lesions. UvrA is an ATPase and a DNA-binding protein. A damage recognition complex composed of 2 UvrA and 2 UvrB subunits scans DNA for abnormalities. When the presence of a lesion has been verified by UvrB, the UvrA molecules dissociate. This is UvrABC system protein A from Rickettsia conorii (strain ATCC VR-613 / Malish 7).